The following is a 601-amino-acid chain: Beta-phellandrene synthase (601 aa).

The N-terminal 35 residues, 1-35 (MSTISIHHVGILRNPLPSKNKRALINNPWSLSLPR), are a transit peptide targeting the chloroplast. Residues Asp356 and Asp360 each coordinate Mn(2+). Positions 356–360 (DDVYD) match the DDXXD motif motif. 2 homodimerization regions span residues 362 to 368 (YGTLDEL) and 434 to 471 (EAEW…LSIP). Asp499 and Glu507 together coordinate Mn(2+).

The protein belongs to the terpene synthase family. As to quaternary structure, homodimer. Requires Mn(2+) as cofactor. It depends on Mg(2+) as a cofactor. Expressed in peltate glandular trichomes. Present at low levels in flowers and stems.

It localises to the plastid. The protein localises to the chloroplast. The catalysed reaction is (2E)-geranyl diphosphate = beta-phellandrene + diphosphate. The enzyme catalyses (2E)-geranyl diphosphate = (1R,5R)-sabinene + diphosphate. It functions in the pathway secondary metabolite biosynthesis; terpenoid biosynthesis. In terms of biological role, involved in the biosynthesis of phenolic monoterpenes natural products. Monoterpene synthase that catalyzes mainly the formation of olefins such as sabinene and beta-phellandrene, and minor amounts of other monoterpenes (e.g. myrcene, gamma-terpinene, alpha-thujene and alpha-pinene) from geranyl diphosphate (GPP). The sequence is that of Beta-phellandrene synthase from Origanum vulgare (Wild marjoram).